The chain runs to 1430 residues: Gag-Pol polyprotein (1430 aa).

The N-myristoyl glycine; by host moiety is linked to residue G2. Residues V7–L31 form an interaction with Gp41 region. Positions L8–R43 are interaction with host CALM1. Residues K12 to I19 form an interaction with host AP3D1 region. Residues D14–H33 form an interaction with membrane phosphatidylinositol 4,5-bisphosphate and RNA region. Positions W16 to R22 match the Nuclear export signal motif. The Nuclear localization signal signature appears at K26–K32. Residues E73–S77 are interaction with membrane phosphatidylinositol 4,5-bisphosphate. Y128 is subject to Phosphotyrosine; by host. Residues N185–Q223 form an interaction with human PPIA/CYPA and NUP153 region. The tract at residues Y273–L359 is dimerization/Multimerization of capsid protein p24. CCHC-type zinc fingers lie at residues V385–A402 and K406–E423. The disordered stretch occupies residues E439–S480. Polar residues predominate over residues S445 to S455. The segment at P484 to L488 is dimerization of protease. Positions R503 to L572 constitute a Peptidase A2 domain. Catalysis depends on D508, which acts as the For protease activity; shared with dimeric partner. 2 dimerization of protease regions span residues G532–K538 and N571–P583. Positions E626–L816 constitute a Reverse transcriptase domain. Positions 692, 767, and 768 each coordinate Mg(2+). The segment at F809–H817 is RT 'primer grip'. Residues W980–W996 carry the Tryptophan repeat motif motif. The RNase H type-1 domain maps to I1016–R1139. Residues D1025, E1060, D1080, and D1131 each contribute to the Mg(2+) site. The segment at D1145–Q1186 adopts an Integrase-type zinc-finger fold. Residues H1154, H1158, C1182, and C1185 each contribute to the Zn(2+) site. The Integrase catalytic domain maps to V1196 to I1346. D1206, D1258, and E1294 together coordinate Mg(2+). The integrase-type DNA-binding region spans F1365 to D1412.

In terms of assembly, homotrimer; further assembles as hexamers of trimers. Interacts with gp41 (via C-terminus). Interacts with host CALM1; this interaction induces a conformational change in the Matrix protein, triggering exposure of the myristate group. Interacts with host AP3D1; this interaction allows the polyprotein trafficking to multivesicular bodies during virus assembly. Part of the pre-integration complex (PIC) which is composed of viral genome, matrix protein, Vpr and integrase. As to quaternary structure, homodimer; the homodimer further multimerizes as homohexamers or homopentamers. Interacts with human PPIA/CYPA; This interaction stabilizes the capsid. Interacts with human NUP153. Interacts with host PDZD8; this interaction stabilizes the capsid. Interacts with monkey TRIM5; this interaction destabilizes the capsid. Homodimer, whose active site consists of two apposed aspartic acid residues. In terms of assembly, heterodimer of p66 RT and p51 RT (RT p66/p51). Heterodimerization of RT is essential for DNA polymerase activity. The overall folding of the subdomains is similar in p66 RT and p51 RT but the spatial arrangements of the subdomains are dramatically different. As to quaternary structure, homotetramer; may further associate as a homohexadecamer. Part of the pre-integration complex (PIC) which is composed of viral genome, matrix protein, Vpr and integrase. Interacts with human SMARCB1/INI1 and human PSIP1/LEDGF isoform 1. Interacts with human KPNA3; this interaction might play a role in nuclear import of the pre-integration complex. Interacts with human NUP153; this interaction might play a role in nuclear import of the pre-integration complex. The cofactor is Mg(2+). Post-translationally, specific enzymatic cleavages by the viral protease yield mature proteins. The protease is released by autocatalytic cleavage. The polyprotein is cleaved during and after budding, this process is termed maturation. Proteolytic cleavage of p66 RT removes the RNase H domain to yield the p51 RT subunit. Nucleocapsid protein p7 might be further cleaved after virus entry. In terms of processing, tyrosine phosphorylated presumably in the virion by a host kinase. Phosphorylation is apparently not a major regulator of membrane association. Phosphorylated possibly by host MAPK1; this phosphorylation is necessary for Pin1-mediated virion uncoating. Post-translationally, methylated by host PRMT6, impairing its function by reducing RNA annealing and the initiation of reverse transcription.

The protein resides in the host cell membrane. It localises to the host endosome. Its subcellular location is the host multivesicular body. The protein localises to the virion membrane. It is found in the host nucleus. The protein resides in the host cytoplasm. It localises to the virion. It carries out the reaction Specific for a P1 residue that is hydrophobic, and P1' variable, but often Pro.. The enzyme catalyses Endohydrolysis of RNA in RNA/DNA hybrids. Three different cleavage modes: 1. sequence-specific internal cleavage of RNA. Human immunodeficiency virus type 1 and Moloney murine leukemia virus enzymes prefer to cleave the RNA strand one nucleotide away from the RNA-DNA junction. 2. RNA 5'-end directed cleavage 13-19 nucleotides from the RNA end. 3. DNA 3'-end directed cleavage 15-20 nucleotides away from the primer terminus.. It catalyses the reaction 3'-end directed exonucleolytic cleavage of viral RNA-DNA hybrid.. The catalysed reaction is DNA(n) + a 2'-deoxyribonucleoside 5'-triphosphate = DNA(n+1) + diphosphate. Protease: The viral protease is inhibited by many synthetic protease inhibitors (PIs), such as amprenavir, atazanavir, indinavir, loprinavir, nelfinavir, ritonavir and saquinavir. Use of protease inhibitors in tritherapy regimens permit more ambitious therapeutic strategies. Reverse transcriptase/ribonuclease H: RT can be inhibited either by nucleoside RT inhibitors (NRTIs) or by non nucleoside RT inhibitors (NNRTIs). NRTIs act as chain terminators, whereas NNRTIs inhibit DNA polymerization by binding a small hydrophobic pocket near the RT active site and inducing an allosteric change in this region. Classical NRTIs are abacavir, adefovir (PMEA), didanosine (ddI), lamivudine (3TC), stavudine (d4T), tenofovir (PMPA), zalcitabine (ddC), and zidovudine (AZT). Classical NNRTIs are atevirdine (BHAP U-87201E), delavirdine, efavirenz (DMP-266), emivirine (I-EBU), and nevirapine (BI-RG-587). The tritherapies used as a basic effective treatment of AIDS associate two NRTIs and one NNRTI. Functionally, mediates, with Gag polyprotein, the essential events in virion assembly, including binding the plasma membrane, making the protein-protein interactions necessary to create spherical particles, recruiting the viral Env proteins, and packaging the genomic RNA via direct interactions with the RNA packaging sequence (Psi). Gag-Pol polyprotein may regulate its own translation, by the binding genomic RNA in the 5'-UTR. At low concentration, the polyprotein would promote translation, whereas at high concentration, the polyprotein would encapsidate genomic RNA and then shut off translation. In terms of biological role, targets the polyprotein to the plasma membrane via a multipartite membrane-binding signal, that includes its myristoylated N-terminus. Matrix protein is part of the pre-integration complex. Implicated in the release from host cell mediated by Vpu. Binds to RNA. Forms the conical core that encapsulates the genomic RNA-nucleocapsid complex in the virion. Most core are conical, with only 7% tubular. The core is constituted by capsid protein hexamer subunits. The core is disassembled soon after virion entry. Host restriction factors such as TRIM5-alpha or TRIMCyp bind retroviral capsids and cause premature capsid disassembly, leading to blocks in reverse transcription. Capsid restriction by TRIM5 is one of the factors which restricts HIV-1 to the human species. Host PIN1 apparently facilitates the virion uncoating. On the other hand, interactions with PDZD8 or CYPA stabilize the capsid. Its function is as follows. Encapsulates and protects viral dimeric unspliced genomic RNA (gRNA). Binds these RNAs through its zinc fingers. Acts as a nucleic acid chaperone which is involved in rearangement of nucleic acid secondary structure during gRNA retrotranscription. Also facilitates template switch leading to recombination. As part of the polyprotein, participates in gRNA dimerization, packaging, tRNA incorporation and virion assembly. Functionally, aspartyl protease that mediates proteolytic cleavages of Gag and Gag-Pol polyproteins during or shortly after the release of the virion from the plasma membrane. Cleavages take place as an ordered, step-wise cascade to yield mature proteins. This process is called maturation. Displays maximal activity during the budding process just prior to particle release from the cell. Also cleaves Nef and Vif, probably concomitantly with viral structural proteins on maturation of virus particles. Hydrolyzes host EIF4GI and PABP1 in order to shut off the capped cellular mRNA translation. The resulting inhibition of cellular protein synthesis serves to ensure maximal viral gene expression and to evade host immune response. Also mediates cleavage of host YTHDF3. Mediates cleavage of host CARD8, thereby activating the CARD8 inflammasome, leading to the clearance of latent HIV-1 in patient CD4(+) T-cells after viral reactivation; in contrast, HIV-1 can evade CARD8-sensing when its protease remains inactive in infected cells prior to viral budding. In terms of biological role, multifunctional enzyme that converts the viral RNA genome into dsDNA in the cytoplasm, shortly after virus entry into the cell. This enzyme displays a DNA polymerase activity that can copy either DNA or RNA templates, and a ribonuclease H (RNase H) activity that cleaves the RNA strand of RNA-DNA heteroduplexes in a partially processive 3' to 5' endonucleasic mode. Conversion of viral genomic RNA into dsDNA requires many steps. A tRNA(3)-Lys binds to the primer-binding site (PBS) situated at the 5'-end of the viral RNA. RT uses the 3' end of the tRNA primer to perform a short round of RNA-dependent minus-strand DNA synthesis. The reading proceeds through the U5 region and ends after the repeated (R) region which is present at both ends of viral RNA. The portion of the RNA-DNA heteroduplex is digested by the RNase H, resulting in a ssDNA product attached to the tRNA primer. This ssDNA/tRNA hybridizes with the identical R region situated at the 3' end of viral RNA. This template exchange, known as minus-strand DNA strong stop transfer, can be either intra- or intermolecular. RT uses the 3' end of this newly synthesized short ssDNA to perform the RNA-dependent minus-strand DNA synthesis of the whole template. RNase H digests the RNA template except for two polypurine tracts (PPTs) situated at the 5'-end and near the center of the genome. It is not clear if both polymerase and RNase H activities are simultaneous. RNase H probably can proceed both in a polymerase-dependent (RNA cut into small fragments by the same RT performing DNA synthesis) and a polymerase-independent mode (cleavage of remaining RNA fragments by free RTs). Secondly, RT performs DNA-directed plus-strand DNA synthesis using the PPTs that have not been removed by RNase H as primers. PPTs and tRNA primers are then removed by RNase H. The 3' and 5' ssDNA PBS regions hybridize to form a circular dsDNA intermediate. Strand displacement synthesis by RT to the PBS and PPT ends produces a blunt ended, linear dsDNA copy of the viral genome that includes long terminal repeats (LTRs) at both ends. Catalyzes viral DNA integration into the host chromosome, by performing a series of DNA cutting and joining reactions. This enzyme activity takes place after virion entry into a cell and reverse transcription of the RNA genome in dsDNA. The first step in the integration process is 3' processing. This step requires a complex comprising the viral genome, matrix protein, Vpr and integrase. This complex is called the pre-integration complex (PIC). The integrase protein removes 2 nucleotides from each 3' end of the viral DNA, leaving recessed CA OH's at the 3' ends. In the second step, the PIC enters cell nucleus. This process is mediated through integrase and Vpr proteins, and allows the virus to infect a non dividing cell. This ability to enter the nucleus is specific of lentiviruses, other retroviruses cannot and rely on cell division to access cell chromosomes. In the third step, termed strand transfer, the integrase protein joins the previously processed 3' ends to the 5' ends of strands of target cellular DNA at the site of integration. The 5'-ends are produced by integrase-catalyzed staggered cuts, 5 bp apart. A Y-shaped, gapped, recombination intermediate results, with the 5'-ends of the viral DNA strands and the 3' ends of target DNA strands remaining unjoined, flanking a gap of 5 bp. The last step is viral DNA integration into host chromosome. This involves host DNA repair synthesis in which the 5 bp gaps between the unjoined strands are filled in and then ligated. Since this process occurs at both cuts flanking the HIV genome, a 5 bp duplication of host DNA is produced at the ends of HIV-1 integration. Alternatively, Integrase may catalyze the excision of viral DNA just after strand transfer, this is termed disintegration. This chain is Gag-Pol polyprotein (gag-pol), found in Homo sapiens (Human).